The following is a 400-amino-acid chain: Riboflavin biosynthesis protein RibBA (400 aa).

A DHBP synthase region spans residues 1 to 202 (MTTFGTIEQA…IADLVMYRRR (202 aa)). D-ribulose 5-phosphate is bound by residues 28 to 29 (RE), Asp-33, 141 to 145 (RTGHT), and Glu-165. Glu-29 contributes to the Mg(2+) binding site. His-144 is a binding site for Mg(2+). The GTP cyclohydrolase II stretch occupies residues 203 to 400 (TEKQVELVAE…KRDRMGHLLG (198 aa)). Position 253–257 (253–257 (RAHSE)) interacts with GTP. The Zn(2+) site is built by Cys-258, Cys-269, and Cys-271. GTP is bound by residues Gln-274, 297 to 299 (EGR), and Thr-319. The Proton acceptor; for GTP cyclohydrolase activity role is filled by Asp-331. Arg-333 serves as the catalytic Nucleophile; for GTP cyclohydrolase activity. 2 residues coordinate GTP: Thr-354 and Lys-359.

In the N-terminal section; belongs to the DHBP synthase family. The protein in the C-terminal section; belongs to the GTP cyclohydrolase II family. Mg(2+) is required as a cofactor. Mn(2+) serves as cofactor. The cofactor is Zn(2+).

It catalyses the reaction D-ribulose 5-phosphate = (2S)-2-hydroxy-3-oxobutyl phosphate + formate + H(+). The catalysed reaction is GTP + 4 H2O = 2,5-diamino-6-hydroxy-4-(5-phosphoribosylamino)-pyrimidine + formate + 2 phosphate + 3 H(+). Its pathway is cofactor biosynthesis; riboflavin biosynthesis; 2-hydroxy-3-oxobutyl phosphate from D-ribulose 5-phosphate: step 1/1. It participates in cofactor biosynthesis; riboflavin biosynthesis; 5-amino-6-(D-ribitylamino)uracil from GTP: step 1/4. Catalyzes the conversion of D-ribulose 5-phosphate to formate and 3,4-dihydroxy-2-butanone 4-phosphate. Functionally, catalyzes the conversion of GTP to 2,5-diamino-6-ribosylamino-4(3H)-pyrimidinone 5'-phosphate (DARP), formate and pyrophosphate. This chain is Riboflavin biosynthesis protein RibBA, found in Salinispora tropica (strain ATCC BAA-916 / DSM 44818 / JCM 13857 / NBRC 105044 / CNB-440).